The primary structure comprises 421 residues: Imidazolonepropionase (421 aa).

His-81 and His-83 together coordinate Fe(3+). Residues His-81 and His-83 each coordinate Zn(2+). Positions 90, 153, and 186 each coordinate 4-imidazolone-5-propanoate. Tyr-153 contacts N-formimidoyl-L-glutamate. A Fe(3+)-binding site is contributed by His-251. His-251 lines the Zn(2+) pocket. Residue Glu-254 participates in 4-imidazolone-5-propanoate binding. Fe(3+) is bound at residue Asp-326. Asp-326 provides a ligand contact to Zn(2+). 2 residues coordinate N-formimidoyl-L-glutamate: Asn-328 and Gly-330. Position 331 (Ser-331) interacts with 4-imidazolone-5-propanoate.

The protein belongs to the metallo-dependent hydrolases superfamily. HutI family. The cofactor is Zn(2+). Fe(3+) serves as cofactor.

Its subcellular location is the cytoplasm. The catalysed reaction is 4-imidazolone-5-propanoate + H2O = N-formimidoyl-L-glutamate. The protein operates within amino-acid degradation; L-histidine degradation into L-glutamate; N-formimidoyl-L-glutamate from L-histidine: step 3/3. Catalyzes the hydrolytic cleavage of the carbon-nitrogen bond in imidazolone-5-propanoate to yield N-formimidoyl-L-glutamate. It is the third step in the universal histidine degradation pathway. This chain is Imidazolonepropionase, found in Streptococcus pyogenes serotype M3 (strain SSI-1).